A 169-amino-acid chain; its full sequence is tRNA (cytidine(56)-2'-O)-methyltransferase (169 aa).

Residues Leu-77, 103–107 (GSEKV), and 121–128 (IGNQPHSE) contribute to the S-adenosyl-L-methionine site.

The protein belongs to the aTrm56 family. Homodimer.

It localises to the cytoplasm. The enzyme catalyses cytidine(56) in tRNA + S-adenosyl-L-methionine = 2'-O-methylcytidine(56) in tRNA + S-adenosyl-L-homocysteine + H(+). Specifically catalyzes the AdoMet-dependent 2'-O-ribose methylation of cytidine at position 56 in tRNAs. In Sulfurisphaera tokodaii (strain DSM 16993 / JCM 10545 / NBRC 100140 / 7) (Sulfolobus tokodaii), this protein is tRNA (cytidine(56)-2'-O)-methyltransferase.